The chain runs to 196 residues: NAD(P)H-quinone oxidoreductase subunit I (196 aa).

2 4Fe-4S ferredoxin-type domains span residues 55–84 (GRIHFEFDKCIACEVCVRVCPINLPVVDWE) and 95–124 (KHYSIDFGVCIFCGNCVEYCPTNCLSMTEE). [4Fe-4S] cluster-binding residues include C64, C67, C70, C74, C104, C107, C110, and C114. The segment at 170-196 (SPHDLPEGSQRSGKRPEEIIEEAEASS) is disordered.

Belongs to the complex I 23 kDa subunit family. NDH-1 is composed of at least 11 different subunits. [4Fe-4S] cluster serves as cofactor.

It localises to the cellular thylakoid membrane. The enzyme catalyses a plastoquinone + NADH + (n+1) H(+)(in) = a plastoquinol + NAD(+) + n H(+)(out). It carries out the reaction a plastoquinone + NADPH + (n+1) H(+)(in) = a plastoquinol + NADP(+) + n H(+)(out). In terms of biological role, NDH-1 shuttles electrons from an unknown electron donor, via FMN and iron-sulfur (Fe-S) centers, to quinones in the respiratory and/or the photosynthetic chain. The immediate electron acceptor for the enzyme in this species is believed to be plastoquinone. Couples the redox reaction to proton translocation, and thus conserves the redox energy in a proton gradient. The sequence is that of NAD(P)H-quinone oxidoreductase subunit I from Crocosphaera subtropica (strain ATCC 51142 / BH68) (Cyanothece sp. (strain ATCC 51142)).